Reading from the N-terminus, the 172-residue chain is S-ribosylhomocysteine lyase (172 aa).

Fe cation is bound by residues histidine 54, histidine 58, and cysteine 128.

It belongs to the LuxS family. As to quaternary structure, homodimer. Fe cation serves as cofactor.

The enzyme catalyses S-(5-deoxy-D-ribos-5-yl)-L-homocysteine = (S)-4,5-dihydroxypentane-2,3-dione + L-homocysteine. Functionally, involved in the synthesis of autoinducer 2 (AI-2) which is secreted by bacteria and is used to communicate both the cell density and the metabolic potential of the environment. The regulation of gene expression in response to changes in cell density is called quorum sensing. Catalyzes the transformation of S-ribosylhomocysteine (RHC) to homocysteine (HC) and 4,5-dihydroxy-2,3-pentadione (DPD). The polypeptide is S-ribosylhomocysteine lyase (Vibrio cholerae serotype O1 (strain ATCC 39541 / Classical Ogawa 395 / O395)).